A 318-amino-acid polypeptide reads, in one-letter code: L-carnitine dehydrogenase (318 aa).

14–19 (GAGVIG) contacts NAD(+).

This sequence belongs to the 3-hydroxyacyl-CoA dehydrogenase family. L-carnitine dehydrogenase subfamily. Homodimer.

The protein localises to the cytoplasm. The catalysed reaction is carnitine + NAD(+) = 3-dehydrocarnitine + NADH + H(+). It participates in amine and polyamine metabolism; carnitine metabolism. Functionally, catalyzes the NAD(+)-dependent oxidation of L-carnitine to 3-dehydrocarnitine. The chain is L-carnitine dehydrogenase from Streptomyces coelicolor (strain ATCC BAA-471 / A3(2) / M145).